We begin with the raw amino-acid sequence, 325 residues long: Small ribosomal subunit biogenesis GTPase RsgA (325 aa).

Positions 80-241 constitute a CP-type G domain; the sequence is LSKQIHIIAS…IIDTPGIKGF (162 aa). Residues 129 to 132 and 183 to 191 contribute to the GTP site; these read NKID and GHSGVGKST. Zn(2+) is bound by residues Cys265, Cys270, His272, and Cys278.

It belongs to the TRAFAC class YlqF/YawG GTPase family. RsgA subfamily. As to quaternary structure, monomer. Associates with 30S ribosomal subunit, binds 16S rRNA. It depends on Zn(2+) as a cofactor.

It is found in the cytoplasm. Its function is as follows. One of several proteins that assist in the late maturation steps of the functional core of the 30S ribosomal subunit. Helps release RbfA from mature subunits. May play a role in the assembly of ribosomal proteins into the subunit. Circularly permuted GTPase that catalyzes slow GTP hydrolysis, GTPase activity is stimulated by the 30S ribosomal subunit. The protein is Small ribosomal subunit biogenesis GTPase RsgA of Flavobacterium johnsoniae (strain ATCC 17061 / DSM 2064 / JCM 8514 / BCRC 14874 / CCUG 350202 / NBRC 14942 / NCIMB 11054 / UW101) (Cytophaga johnsonae).